The chain runs to 762 residues: Endonuclease MutS2 (762 aa).

329–336 (GPNTGGKT) is an ATP binding site. The 76-residue stretch at 682 to 757 (LNLIGKDVET…GSGVTVVYLE (76 aa)) folds into the Smr domain.

Belongs to the DNA mismatch repair MutS family. MutS2 subfamily. As to quaternary structure, homodimer. Binds to stalled ribosomes, contacting rRNA.

In terms of biological role, endonuclease that is involved in the suppression of homologous recombination and thus may have a key role in the control of bacterial genetic diversity. Functionally, acts as a ribosome collision sensor, splitting the ribosome into its 2 subunits. Detects stalled/collided 70S ribosomes which it binds and splits by an ATP-hydrolysis driven conformational change. Acts upstream of the ribosome quality control system (RQC), a ribosome-associated complex that mediates the extraction of incompletely synthesized nascent chains from stalled ribosomes and their subsequent degradation. Probably generates substrates for RQC. The protein is Endonuclease MutS2 of Aquifex aeolicus (strain VF5).